We begin with the raw amino-acid sequence, 493 residues long: GPI alpha-1,6-mannosyltransferase 2 (493 aa).

The Cytoplasmic portion of the chain corresponds to 1–13; it reads MWPQDPSRKEVLR. A helical membrane pass occupies residues 14–34; it reads FAVSCRILTLMLQALFNAIIP. The Lumenal segment spans residues 35–77; sequence DHHAEAFSPPRLAPSGFVDQLVEGLLGGLSHWDAEHFLFIAEH. Residues 78-98 form a helical membrane-spanning segment; sequence GYLYEHNFAFFPGFPLALLVG. Residues 99–113 are Cytoplasmic-facing; the sequence is TELLRPLRGLLSLRS. Residues 114–134 form a helical membrane-spanning segment; the sequence is CLLISVASLNFLFFMLAAVAL. Topologically, residues 135–136 are lumenal; it reads HD. Residues 137-157 traverse the membrane as a helical segment; that stretch reads LGCLVLHCPHQSFYAALLFCL. The Cytoplasmic portion of the chain corresponds to 158 to 161; that stretch reads SPAN. The helical transmembrane segment at 162–182 threads the bilayer; it reads VFLAAGYSEALFALLTFSAMG. Residues 183–192 lie on the Lumenal side of the membrane; it reads QLERGRVWTS. Residues 193 to 213 traverse the membrane as a helical segment; the sequence is VLLFAFATGVRSNGLVSVGFL. Over 214–234 the chain is Cytoplasmic; it reads MHSQCQGFFSSLTMLNPLRQL. Residues 235-255 traverse the membrane as a helical segment; sequence FKLMASLFLSVFTLGLPFALF. Residues 256–327 lie on the Lumenal side of the membrane; it reads QYYAYTQFCL…KYYELKQVPN (72 aa). The chain crosses the membrane as a helical span at residues 328–348; sequence FLLAAPVAILVAWATWTYVTT. Over 349 to 378 the chain is Cytoplasmic; sequence HPWLCLTLGLQRSKNNKTLEKPDLGFLSPQ. The helical transmembrane segment at 379–399 threads the bilayer; sequence VFVYVVHAAVLLLFGGLCMHV. At 400-469 the chain is on the lumenal side; the sequence is QVLTRFLGSS…HWKTCSPVTR (70 aa). A helical membrane pass occupies residues 470–490; that stretch reads YILGYFLTYWLLGLLLHCNFL. At 491–493 the chain is on the cytoplasmic side; the sequence is PWT.

It belongs to the PIGV family. Not N-glycosylated.

It localises to the endoplasmic reticulum membrane. Its pathway is glycolipid biosynthesis; glycosylphosphatidylinositol-anchor biosynthesis. In terms of biological role, alpha-1,6-mannosyltransferase that catalyzes the transfer of the second mannose, via an alpha-1,6 bond, from a dolichol-phosphate-mannose (Dol-P-Man) to the alpha-D-Man-(1-&gt;4)-alpha-D-GlcN-(1-&gt;6)-(1-radyl,2-acyl-sn-glycero-3-phospho)-2-acyl-inositol (also termed H2) intermediate to generate an alpha-D-Man-(1-&gt;6)-alpha-D-Man-(1-&gt;4)-alpha-D-GlcN-(1-&gt;6)-(1-radyl,2-acyl-sn-glycero-3-phospho)-2-acyl-inositol (also termed H3) and participates in the seventh step of the glycosylphosphatidylinositol-anchor biosynthesis. Also transfers the second mannose on a 2-PEtn-alpha-D-Man-(1-&gt;4)-alpha-D-GlcN-(1-&gt;6)-(1-radyl,2-acyl-sn-glycero-3-phospho)-2-acyl-inositol (also termed H5). This is GPI alpha-1,6-mannosyltransferase 2 from Homo sapiens (Human).